The chain runs to 489 residues: Hydantoin permease (489 aa).

12 consecutive transmembrane segments (helical) span residues 30–50 (FSLA…IAAG), 58–78 (VWQV…LLFF), 104–124 (LIPI…QTWL), 144–164 (LWIV…ITFI), 167–187 (MNVF…YLML), 207–227 (MPFS…VVSI), 258–278 (LGMV…MVLV), 299–321 (AILF…NLLS), 339–359 (GVIV…AGVL), 362–382 (FLNL…SDYF), 405–424 (RGVN…VSFL), and 428–445 (LMFV…IPAM). Na(+) is bound by residues Ala38 and Ile41. Gln121 provides a ligand contact to substrate. Substrate is bound at residue Gly219. The Na(+) site is built by Ala309, Ser312, and Thr313. A substrate-binding site is contributed by Asn318. The disordered stretch occupies residues 468-489 (PIGPVAPADESATANTKEQNQR). Over residues 479–489 (ATANTKEQNQR) the composition is skewed to polar residues.

Belongs to the purine-cytosine permease (2.A.39) family.

It localises to the membrane. Its activity is regulated as follows. Inhibited by dinitrophenol, 5-(2-naphthylmethyl)-D-hydantoin (D-NMH), 5-(2-naphthylmethyl)-L-hydantoin (L-NMH), 5-bromovinylhydantoin (BVH) and 5-indolylmethyl-L-hydantoin (L-IMH). The affinity of benzyl-hydantoin is increased over 10-fold in the presence of 15 mM of sodium. Its function is as follows. Nucleobase-proton symporter that mediates the sodium-dependent binding and uptake of 5-aryl-substituted hydantoin compounds. 5-indolyl methyl hydantoin and 5-benzyl hydantoin are the preferred substrates, with selectivity for a hydrophobic substituent in position 5 of hydantoin and for the L isomer over the D isomer. The sequence is that of Hydantoin permease from Microbacterium maritypicum (Microbacterium liquefaciens).